The primary structure comprises 559 residues: Alpha-(1,6)-fucosyltransferase (559 aa).

The Cytoplasmic segment spans residues 1–4 (MLKC). The helical; Signal-anchor for type II membrane protein transmembrane segment at 5-24 (IAAVGTVVWMTMFLFLYSQL) threads the bilayer. Topologically, residues 25–559 (SNNQSGGDSI…RKFKFEALLD (535 aa)) are lumenal. N-linked (GlcNAc...) asparagine glycosylation occurs at N27. The span at 63–74 (QERNDQHKKIME) shows a compositional bias: basic and acidic residues. The segment at 63-90 (QERNDQHKKIMEQSHQLPPNPENPSLPK) is disordered. Over residues 80–90 (PPNPENPSLPK) the composition is skewed to pro residues. N134 carries N-linked (GlcNAc...) asparagine glycosylation. 3 cysteine pairs are disulfide-bonded: C188–C251, C196–C214, and C202–C206. Residues 190–480 (EAKTLVCNLD…ADDGSKFHSL (291 aa)) enclose the GT23 domain. The interval 351 to 352 (RR) is important for donor substrate binding. A disulfide bridge connects residues C452 and C459. The SH3 domain maps to 489–550 (QQAHEVIVIE…PSYKVVNDWR (62 aa)).

This sequence belongs to the glycosyltransferase 23 family. Requires Mn(2+) as cofactor. Mg(2+) is required as a cofactor.

The protein resides in the golgi apparatus. It is found in the golgi stack membrane. The enzyme catalyses N(4)-{beta-D-GlcNAc-(1-&gt;2)-alpha-D-Man-(1-&gt;3)-[beta-D-GlcNAc-(1-&gt;2)-alpha-D-Man-(1-&gt;6)]-beta-D-Man-(1-&gt;4)-beta-D-GlcNAc-(1-&gt;4)-beta-D-GlcNAc}-L-asparaginyl-[protein] + GDP-beta-L-fucose = an N(4)-{beta-D-GlcNAc-(1-&gt;2)-alpha-D-Man-(1-&gt;3)-[beta-D-GlcNAc-(1-&gt;2)-alpha-D-Man-(1-&gt;6)]-beta-D-Man-(1-&gt;4)-beta-D-GlcNAc-(1-&gt;4)-[alpha-L-Fuc-(1-&gt;6)]-beta-D-GlcNAc}-L-asparaginyl-[protein] + GDP + H(+). It participates in protein modification; protein glycosylation. Its activity is regulated as follows. Inhibited by Fe(3+), Ni(2+) and Cu(2+). Functionally, catalyzes the addition of fucose in alpha 1-6 linkage to the first GlcNAc residue, next to the peptide chains in N-glycans. The addition is prevented if the GlcNAc residue is already fucosylated. Involved in susceptibility to the nematotoxic C.cinerea galectin Cgl2, likely by contributing to the synthesis of core alpha-1,6-fucosylated N-glycans to which Cgl2 binds. This Caenorhabditis elegans protein is Alpha-(1,6)-fucosyltransferase.